The chain runs to 395 residues: Outer membrane protein assembly factor BamB (395 aa).

An N-terminal signal peptide occupies residues 1-20 (MKSWCKNLLAAGLSLAMLSA). Cysteine 21 carries the N-palmitoyl cysteine lipid modification. A lipid anchor (S-diacylglycerol cysteine) is attached at cysteine 21.

It belongs to the BamB family. In terms of assembly, part of the Bam complex.

The protein localises to the cell outer membrane. Its function is as follows. Part of the outer membrane protein assembly complex, which is involved in assembly and insertion of beta-barrel proteins into the outer membrane. The chain is Outer membrane protein assembly factor BamB from Shewanella oneidensis (strain ATCC 700550 / JCM 31522 / CIP 106686 / LMG 19005 / NCIMB 14063 / MR-1).